The primary structure comprises 85 residues: U1-theraphotoxin-Hs1a (85 aa).

An N-terminal signal peptide occupies residues 1 to 22; the sequence is MKVTLIAILTCAAVLVLHTTAA. Residues 23 to 48 constitute a propeptide that is removed on maturation; that stretch reads EELEAESQLMEVGMPDTELAAVDEER. Intrachain disulfides connect C52/C66, C56/C77, and C71/C82.

As to quaternary structure, heterodimer composed of the two variants Ile-58 and Gln-58. Expressed by the venom gland.

Its subcellular location is the secreted. Lethal neurotoxin that blocks neuromuscular transmission. Acts cooperatively to potentiate the activity of huwentoxin-I. This toxin is active against insects. The protein is U1-theraphotoxin-Hs1a of Cyriopagopus schmidti (Chinese bird spider).